The primary structure comprises 190 residues: 6,7-dimethyl-8-ribityllumazine synthase (190 aa).

5-amino-6-(D-ribitylamino)uracil-binding positions include phenylalanine 23, 61–63 (SFE), and 85–87 (AVI). 90–91 (QT) contacts (2S)-2-hydroxy-3-oxobutyl phosphate. The Proton donor role is filled by histidine 93. Position 118 (phenylalanine 118) interacts with 5-amino-6-(D-ribitylamino)uracil. Arginine 132 contributes to the (2S)-2-hydroxy-3-oxobutyl phosphate binding site.

Belongs to the DMRL synthase family.

The catalysed reaction is (2S)-2-hydroxy-3-oxobutyl phosphate + 5-amino-6-(D-ribitylamino)uracil = 6,7-dimethyl-8-(1-D-ribityl)lumazine + phosphate + 2 H2O + H(+). Its pathway is cofactor biosynthesis; riboflavin biosynthesis; riboflavin from 2-hydroxy-3-oxobutyl phosphate and 5-amino-6-(D-ribitylamino)uracil: step 1/2. Its function is as follows. Catalyzes the formation of 6,7-dimethyl-8-ribityllumazine by condensation of 5-amino-6-(D-ribitylamino)uracil with 3,4-dihydroxy-2-butanone 4-phosphate. This is the penultimate step in the biosynthesis of riboflavin. The protein is 6,7-dimethyl-8-ribityllumazine synthase of Nostoc sp. (strain PCC 7120 / SAG 25.82 / UTEX 2576).